Consider the following 44-residue polypeptide: U9-ctenitoxin-Co1a (44 aa).

Intrachain disulfides connect cysteine 3–cysteine 17, cysteine 10–cysteine 23, cysteine 16–cysteine 33, and cysteine 25–cysteine 31.

As to expression, expressed by the venom gland.

The protein resides in the secreted. Its function is as follows. Insecticidal neurotoxin that reversibly inhibits the N-methyl-D-aspartate (NMDA)-subtype of ionotropic glutamate receptor (GRIN) and inhibits inactivation of insect sodium channels (Nav). In vivo, is highly toxic to insects. The sequence is that of U9-ctenitoxin-Co1a from Ctenus ornatus (Brazilian spider).